Here is a 93-residue protein sequence, read N- to C-terminus: Large ribosomal subunit protein uL23 (93 aa).

Belongs to the universal ribosomal protein uL23 family. In terms of assembly, part of the 50S ribosomal subunit. Contacts protein L29, and trigger factor when it is bound to the ribosome.

Functionally, one of the early assembly proteins it binds 23S rRNA. One of the proteins that surrounds the polypeptide exit tunnel on the outside of the ribosome. Forms the main docking site for trigger factor binding to the ribosome. The chain is Large ribosomal subunit protein uL23 from Nautilia profundicola (strain ATCC BAA-1463 / DSM 18972 / AmH).